Here is a 360-residue protein sequence, read N- to C-terminus: Cyclin-dependent kinase 10 (360 aa).

One can recognise a Protein kinase domain in the interval 39–323; it reads FEKLNRIGEG…AGDCLESSYF (285 aa). ATP is bound by residues 45–53 and Lys-68; that span reads IGEGTYGIV. The Proton acceptor role is filled by Asp-163. The residue at position 196 (Thr-196) is a Phosphothreonine. A disordered region spans residues 334–360; that stretch reads LMPTFPHHRNKRAAPATSEGQSKRCKP.

The protein belongs to the protein kinase superfamily. CMGC Ser/Thr protein kinase family. CDC2/CDKX subfamily. Heterodimer with CCNQ, the interaction is required for kinase activity. Interacts with ETS2. Interacts with PRK2.

It localises to the cytoplasm. The protein resides in the cytoskeleton. It is found in the cilium basal body. It carries out the reaction L-seryl-[protein] + ATP = O-phospho-L-seryl-[protein] + ADP + H(+). The catalysed reaction is L-threonyl-[protein] + ATP = O-phospho-L-threonyl-[protein] + ADP + H(+). Functionally, cyclin-dependent kinase that phosphorylates the transcription factor ETS2 (in vitro) and positively controls its proteasomal degradation (in cells). Involved in the regulation of actin cytoskeleton organization through the phosphorylation of actin dynamics regulators such as PKN2. Is a negative regulator of ciliogenesis through phosphorylation of PKN2 and promotion of RhoA signaling. In Homo sapiens (Human), this protein is Cyclin-dependent kinase 10 (CDK10).